The following is a 310-amino-acid chain: Taste receptor type 2 member 125 (310 aa).

Residues 1–2 (MG) lie on the Extracellular side of the membrane. Residues 3-23 (IVIGIICAFIIIVQFIIGNVA) form a helical membrane-spanning segment. The Cytoplasmic portion of the chain corresponds to 24 to 46 (NGFIALVNIIDWVKRRKISLVDQ). The helical transmembrane segment at 47–67 (IITALAISRIDMLCSTFLIVL) threads the bilayer. The Extracellular portion of the chain corresponds to 68–87 (ITSLYPDLNTAVNMVKISNN). A helical transmembrane segment spans residues 88–108 (IWIVANHFSIWLATSLSIFYF). At 109 to 128 (LKIANFSNYVFLCLRWRLSK) the chain is on the cytoplasmic side. The helical transmembrane segment at 129-149 (VVSVTLLLSLVLLLMNILIMN) threads the bilayer. Over 150–185 (MHIDTWSDGFKRNVSFGFRSKNCTRFFKLALLINTT) the chain is Extracellular. Asn162, Asn171, and Asn183 each carry an N-linked (GlcNAc...) asparagine glycan. A helical membrane pass occupies residues 186 to 206 (FTCVPFTVSMVAFLLLIFSLW). Topologically, residues 207-232 (RHLKNMQYHAKGSRDPSTAVHIKALQ) are cytoplasmic. A helical membrane pass occupies residues 233-253 (MVVVFVLFYTFFFLSLAIQLW). Topologically, residues 254–261 (TSESLEKN) are extracellular. The chain crosses the membrane as a helical span at residues 262-282 (NLFYVTLIITFPSVHSCMLIL). Over 283-310 (RNSKLRQASLLVLWWLLCRSKDIQTLVP) the chain is Cytoplasmic.

It belongs to the G-protein coupled receptor T2R family.

It is found in the membrane. Functionally, putative taste receptor which may play a role in the perception of bitterness. The protein is Taste receptor type 2 member 125 of Rattus norvegicus (Rat).